A 256-amino-acid polypeptide reads, in one-letter code: Thiazole synthase (256 aa).

Lysine 95 (schiff-base intermediate with DXP) is an active-site residue. Residues glycine 156, 182-183 (AG), and 204-205 (NT) contribute to the 1-deoxy-D-xylulose 5-phosphate site.

Belongs to the ThiG family. Homotetramer. Forms heterodimers with either ThiH or ThiS.

It is found in the cytoplasm. It catalyses the reaction [ThiS sulfur-carrier protein]-C-terminal-Gly-aminoethanethioate + 2-iminoacetate + 1-deoxy-D-xylulose 5-phosphate = [ThiS sulfur-carrier protein]-C-terminal Gly-Gly + 2-[(2R,5Z)-2-carboxy-4-methylthiazol-5(2H)-ylidene]ethyl phosphate + 2 H2O + H(+). The protein operates within cofactor biosynthesis; thiamine diphosphate biosynthesis. In terms of biological role, catalyzes the rearrangement of 1-deoxy-D-xylulose 5-phosphate (DXP) to produce the thiazole phosphate moiety of thiamine. Sulfur is provided by the thiocarboxylate moiety of the carrier protein ThiS. In vitro, sulfur can be provided by H(2)S. This chain is Thiazole synthase, found in Photobacterium profundum (strain SS9).